Consider the following 270-residue polypeptide: Putative protein-disulfide oxidoreductase RT0103 (270 aa).

Positions 1–17 (MKNIFIVLIFLFLSSCA) are cleaved as a signal peptide. The Thioredoxin domain maps to 71–264 (SVLTQDLHEQ…ISRAVDRALE (194 aa)). C117 and C120 are oxidised to a cystine.

This sequence belongs to the thioredoxin family. DsbA subfamily.

The protein resides in the periplasm. Its function is as follows. May be required for disulfide bond formation in some proteins. This is Putative protein-disulfide oxidoreductase RT0103 from Rickettsia typhi (strain ATCC VR-144 / Wilmington).